Here is a 320-residue protein sequence, read N- to C-terminus: o-succinylbenzoate synthase (320 aa).

The Proton donor role is filled by K133. 3 residues coordinate Mg(2+): D161, E190, and D213. The Proton acceptor role is filled by K235.

The protein belongs to the mandelate racemase/muconate lactonizing enzyme family. MenC type 1 subfamily. A divalent metal cation is required as a cofactor.

The catalysed reaction is (1R,6R)-6-hydroxy-2-succinyl-cyclohexa-2,4-diene-1-carboxylate = 2-succinylbenzoate + H2O. It functions in the pathway quinol/quinone metabolism; 1,4-dihydroxy-2-naphthoate biosynthesis; 1,4-dihydroxy-2-naphthoate from chorismate: step 4/7. The protein operates within quinol/quinone metabolism; menaquinone biosynthesis. Functionally, converts 2-succinyl-6-hydroxy-2,4-cyclohexadiene-1-carboxylate (SHCHC) to 2-succinylbenzoate (OSB). The chain is o-succinylbenzoate synthase from Shigella flexneri.